A 429-amino-acid polypeptide reads, in one-letter code: Ribosomal RNA small subunit methyltransferase B (429 aa).

S-adenosyl-L-methionine-binding positions include 254–260, D277, D303, and D322; that span reads CAAPGGK. C375 (nucleophile) is an active-site residue.

It belongs to the class I-like SAM-binding methyltransferase superfamily. RsmB/NOP family.

The protein resides in the cytoplasm. It carries out the reaction cytidine(967) in 16S rRNA + S-adenosyl-L-methionine = 5-methylcytidine(967) in 16S rRNA + S-adenosyl-L-homocysteine + H(+). In terms of biological role, specifically methylates the cytosine at position 967 (m5C967) of 16S rRNA. This Escherichia coli (strain UTI89 / UPEC) protein is Ribosomal RNA small subunit methyltransferase B.